The following is a 149-amino-acid chain: Placenta growth factor (149 aa).

Residues 1-18 (MPTVRLFTCFLQLLTGLV) form the signal peptide. Residue N33 is glycosylated (N-linked (GlcNAc...) asparagine). 3 disulfide bridges follow: C52–C94, C83–C128, and C87–C130. Residue N101 is glycosylated (N-linked (GlcNAc...) asparagine).

The protein belongs to the PDGF/VEGF growth factor family. Antiparallel homodimer; disulfide-linked. Also found as heterodimer with VEGFA/VEGF.

The protein resides in the secreted. Its function is as follows. Growth factor active in angiogenesis and endothelial cell growth, stimulating their proliferation and migration. It binds to the receptor FLT1/VEGFR-1. Also promotes cell tumor growth. The chain is Placenta growth factor (PGF) from Bos taurus (Bovine).